A 477-amino-acid chain; its full sequence is Kinesin-like protein KIN-1 (477 aa).

The Kinesin motor domain occupies 3 to 330; the sequence is NVTVCVRFRP…VRFGTRTKLI (328 aa). 86–93 lines the ATP pocket; the sequence is GQTGAGKT. Positions 402–451 form a coiled coil; sequence QDAASQEVSLLTQAVEELKETVEELTDENERLRGELELAQEAAAAAAAAR.

It belongs to the TRAFAC class myosin-kinesin ATPase superfamily. Kinesin family. KIN-1 subfamily. As to expression, widely expressed. Expressed in young roots and leaves, in mature roots, culm, sheath and leaves, and in panicles at various developmental stages. Strongest expression is detected in panicles. In the panicle, expression is detected in anthers, glumme, lemma and palea. In the spikelet, expression is detected in both microsporocyte and the anther walls.

Its subcellular location is the cytoplasm. In terms of biological role, kinesin-like motor protein that exhibits microtubule-stimulated ATPase activity. Plays an essential role in male meiotic chromosomal dynamics, male gametogenesis and anther dehiscence. May play a minor and nonessential role in regulating meiotic spindle formation. In Oryza sativa subsp. japonica (Rice), this protein is Kinesin-like protein KIN-1.